A 552-amino-acid polypeptide reads, in one-letter code: MELKWVSCRKQSLFLISCLALLCLASLDTISCESTQNATDFKKRSQTVSCPPDWIIGPNQTKCYAYFKNSTSWEKSEMFCRTYGGHLASLASSKELSFVQKLCNGNVSSCWIGGRSMNSSTSGFRWSWSDPKTPQWNQSMFPKVPIRTRCGNGNGSSSCRANICIAVTNGSSSIFGERCNASHAFVCAVDSDIKCRNCHKYLVILAVVSGLILFTTFAIILWLLVYKRSKKRRKSRKVSNPASSSSVVPPSWKIFTSEELRSMTKNFSEANRLAGDAKTGGTYSGGLSDGTKVAVKRLKRSSFQRKKEFYSEIRRAAKLYHPNVVAIKGCCYDHGERFIVYEFIASGPLDRWLHHVPRGGRSLDWNMRLNIATTLAQGIAFLHDKVKPQVVHRDIRASNVLLDEEFGAHLMGVGLSKFVPWEVMQERTVMAGGTYGYLAPEYVYRNELTTKSDVYSFGVLLLEIVSGRRPTQAVNSSVGWQSIFEWATPLVQANRWLEILDPVITCGLPEACVVQKVVDLVYSCTQNVPSMRPRMSHVVHQLQQLVQPLEVK.

Residues 1–27 form the signal peptide; the sequence is MELKWVSCRKQSLFLISCLALLCLASL. Over 28 to 201 the chain is Extracellular; it reads DTISCESTQN…DIKCRNCHKY (174 aa). Residues asparagine 37, asparagine 59, asparagine 69, asparagine 106, asparagine 118, asparagine 137, asparagine 154, asparagine 169, and asparagine 180 are each glycosylated (N-linked (GlcNAc...) asparagine). The C-type lectin domain maps to 59–188; the sequence is NQTKCYAYFK…CNASHAFVCA (130 aa). 2 cysteine pairs are disulfide-bonded: cysteine 80-cysteine 187 and cysteine 164-cysteine 179. The helical transmembrane segment at 202–222 threads the bilayer; it reads LVILAVVSGLILFTTFAIILW. Residues 223–552 lie on the Cytoplasmic side of the membrane; that stretch reads LLVYKRSKKR…QQLVQPLEVK (330 aa). The Protein kinase domain occupies 268-546; the sequence is SEANRLAGDA…HVVHQLQQLV (279 aa). Residues 274-282 and lysine 296 each bind ATP; that span reads AGDAKTGGT. The active-site Proton acceptor is aspartate 394.

It belongs to the protein kinase superfamily. Tyr protein kinase family.

It localises to the cell membrane. It carries out the reaction L-tyrosyl-[protein] + ATP = O-phospho-L-tyrosyl-[protein] + ADP + H(+). This chain is C-type lectin receptor-like tyrosine-protein kinase At1g52310, found in Arabidopsis thaliana (Mouse-ear cress).